The primary structure comprises 470 residues: MSNHEKMSTTDLMENLREELTCFICLDYFSSPVTTECGHSFCLMCLLKSWEEHNTPLSCPECWRTLGAPHFQANERLGRLANIGRQLRSQVLQSEDEQSICGRMPGPSWVFSDDEQSVINVSPPSQGTNKACFSSEAEEQHKEKLQDIINILRKKKKEVQAILNHEKERVMLCKEETKTCKQVVVSEYMKMHQFLKEEEQLQLQLLEREEKANMKKLRENEIQLTQQIRRLGKMIGRIESTCQNLTLESFEEVKGAMDRYESLLFQSPETTITELSLCHITGMREMLRKFSTDITLDPATANAYLLLSEDLKSVRYGGTRQQLPDNPERFDQSATVLGAQIFTCGRHYWEVEVGKKTEWEVGICKDSVNRKGNLPKPPGDLFSLIGLKIGDDYSLWVSSPLKGQHVREPVHKVGVFLDYDSGHIAFYNATDESLIYSFPPTPFHEALRPIFSPCLPNEGTNTDPLIICHI.

The segment at 22–63 adopts an RING-type zinc-finger fold; sequence CFICLDYFSSPVTTECGHSFCLMCLLKSWEEHNTPLSCPECW. Coiled-coil stretches lie at residues 135 to 170 and 196 to 235; these read SEAEEQHKEKLQDIINILRKKKKEVQAILNHEKERV and KEEEQLQLQLLEREEKANMKKLRENEIQLTQQIRRLGKMI. The B30.2/SPRY domain occupies 273–470; that stretch reads TELSLCHITG…NTDPLIICHI (198 aa).

Interacts with USP5. Testis.

It catalyses the reaction S-ubiquitinyl-[E2 ubiquitin-conjugating enzyme]-L-cysteine + [acceptor protein]-L-lysine = [E2 ubiquitin-conjugating enzyme]-L-cysteine + N(6)-ubiquitinyl-[acceptor protein]-L-lysine.. It functions in the pathway protein modification; protein ubiquitination. Functionally, probable E3 ubiquitin-protein ligase which plays an important role in blastocyst development. Involved in progression of blastocyst stage and subsequent embryo development. This Mus musculus (Mouse) protein is Probable E3 ubiquitin-protein ligase TRIML1 (Triml1).